The following is a 162-amino-acid chain: Cyanate hydratase (162 aa).

Active-site residues include Arg-90, Glu-93, and Ser-116.

Belongs to the cyanase family.

It carries out the reaction cyanate + hydrogencarbonate + 3 H(+) = NH4(+) + 2 CO2. Its function is as follows. Catalyzes the reaction of cyanate with bicarbonate to produce ammonia and carbon dioxide. The protein is Cyanate hydratase of Populus trichocarpa (Western balsam poplar).